The following is a 244-amino-acid chain: Myosin-7 (244 aa).

The interval 1 to 244 is rodlike tail (S2 and LMM domains); that stretch reads VEQTERSRKL…DIGTKGLNEE (244 aa). Residues 1 to 244 are a coiled coil; the sequence is VEQTERSRKL…DIGTKGLNEE (244 aa). The segment at 216-244 is disordered; sequence EERADIAESQVNKLRAKSRDIGTKGLNEE. Residues 232-244 show a composition bias toward basic and acidic residues; that stretch reads KSRDIGTKGLNEE.

Muscle myosin is a hexameric protein that consists of 2 heavy chain subunits (MHC), 2 alkali light chain subunits (MLC) and 2 regulatory light chain subunits (MLC-2). Interacts with ECPAS. Interacts (via C-terminus) with LRRC39.

The protein resides in the cytoplasm. Its subcellular location is the myofibril. The protein localises to the sarcomere. Functionally, myosins are actin-based motor molecules with ATPase activity essential for muscle contraction. Forms regular bipolar thick filaments that, together with actin thin filaments, constitute the fundamental contractile unit of skeletal and cardiac muscle. The polypeptide is Myosin-7 (MYH7) (Papio hamadryas (Hamadryas baboon)).